A 388-amino-acid polypeptide reads, in one-letter code: Beta-hexosaminidase LpqI (388 aa).

A signal peptide spans 1 to 19; the sequence is MAFPRTLAILAAAAALVVA. Residue C20 is the site of N-palmitoyl cysteine attachment. C20 is lipidated: S-diacylglycerol cysteine. Substrate is bound by residues D123, R131, R193, and 223–224; that span reads KH. H236 (proton donor/acceptor) is an active-site residue. The Nucleophile role is filled by D311.

The protein belongs to the glycosyl hydrolase 3 family.

The protein resides in the cell inner membrane. It catalyses the reaction Hydrolysis of terminal non-reducing N-acetyl-D-hexosamine residues in N-acetyl-beta-D-hexosaminides.. It functions in the pathway cell wall biogenesis; peptidoglycan recycling. Its function is as follows. Plays a role in peptidoglycan recycling by cleaving the terminal beta-1,4-linked N-acetylglucosamine (GlcNAc) from peptidoglycan fragments. Acts as a regulator for GlcNAc-MurNAc levels by cleaving disaccharides and allowing the breakdown of MurNAc. The chain is Beta-hexosaminidase LpqI from Mycobacterium tuberculosis (strain ATCC 25618 / H37Rv).